Here is a 740-residue protein sequence, read N- to C-terminus: E3 ubiquitin-protein ligase TRIM9 (740 aa).

The RING-type; degenerate zinc-finger motif lies at 7-30 (CPTCKQLYANPVLLPCFHALCLGC). Positions 64 to 73 (GNGGGAGGGA) are enriched in gly residues. The disordered stretch occupies residues 64-114 (GNGGGAGGGAAAPVTNPNGPGTRHSSHSSAASTASSNTGSESVTSDQDQSD). Positions 74–105 (AAPVTNPNGPGTRHSSHSSAASTASSNTGSES) are enriched in low complexity. The B box-type 1; atypical zinc-finger motif lies at 195–244 (REALRCQMCETDPKVASLICEQCEIRYCDACRELTHPARGPLAKHTLVKP). Positions 200, 203, 225, 230, 255, 258, 277, and 283 each coordinate Zn(2+). The B box-type 2 zinc-finger motif lies at 250–291 (QRESVCGEHEETLSQYCLSCKAPACGLCIGELRHQAHDVQSI). A coiled-coil region spans residues 294 to 324 (TCKAQKTELSHNLQQLSEKARSTTEFIQRLK). In terms of domain architecture, COS spans 399–459 (LKETDSAAFL…ARAIDNLNFI (61 aa)). The 94-residue stretch at 474-567 (APMTPTILPS…ELIGLQTAEV (94 aa)) folds into the Fibronectin type-III domain. In terms of domain architecture, B30.2/SPRY spans 549–736 (NSAGEGEYSE…TMHTAMDAPK (188 aa)).

It belongs to the TRIM/RBCC family. Interacts (via fibronectin type-III domain) with pico. Interacts (via SPRY domain) with netrin receptor fra.

It localises to the cell projection. The protein resides in the axon. It is found in the perikaryon. It carries out the reaction S-ubiquitinyl-[E2 ubiquitin-conjugating enzyme]-L-cysteine + [acceptor protein]-L-lysine = [E2 ubiquitin-conjugating enzyme]-L-cysteine + N(6)-ubiquitinyl-[acceptor protein]-L-lysine.. It functions in the pathway protein modification; protein ubiquitination. Functionally, E3 ubiquitin-protein ligase activity. During embryonic and larval development, regulates the pattern of axonal projections of class IV nociceptive sensory neurons (C4da) downstream of netrin receptor fra. Regulates fine-scale topography of C4da axon terminals upon neuronal activity. During eye development, consolidates the attachment of R8 photoreceptor growth cones to the target medulla layer, probably downstream of fra. The polypeptide is E3 ubiquitin-protein ligase TRIM9 (Drosophila melanogaster (Fruit fly)).